A 347-amino-acid polypeptide reads, in one-letter code: Phenylalanine--tRNA ligase alpha subunit (347 aa).

E265 serves as a coordination point for Mg(2+).

The protein belongs to the class-II aminoacyl-tRNA synthetase family. Phe-tRNA synthetase alpha subunit type 1 subfamily. Tetramer of two alpha and two beta subunits. Requires Mg(2+) as cofactor.

It localises to the cytoplasm. The enzyme catalyses tRNA(Phe) + L-phenylalanine + ATP = L-phenylalanyl-tRNA(Phe) + AMP + diphosphate + H(+). The protein is Phenylalanine--tRNA ligase alpha subunit of Mycolicibacterium gilvum (strain PYR-GCK) (Mycobacterium gilvum (strain PYR-GCK)).